The primary structure comprises 443 residues: 5-methylthioadenosine/S-adenosylhomocysteine deaminase 1 (443 aa).

2 residues coordinate Zn(2+): His69 and His71. The substrate site is built by Glu98 and His191. Residue His218 participates in Zn(2+) binding. Positions 221 and 306 each coordinate substrate. Asp306 is a Zn(2+) binding site.

It belongs to the metallo-dependent hydrolases superfamily. MTA/SAH deaminase family. The cofactor is Zn(2+).

The catalysed reaction is S-adenosyl-L-homocysteine + H2O + H(+) = S-inosyl-L-homocysteine + NH4(+). The enzyme catalyses S-methyl-5'-thioadenosine + H2O + H(+) = S-methyl-5'-thioinosine + NH4(+). Functionally, catalyzes the deamination of 5-methylthioadenosine and S-adenosyl-L-homocysteine into 5-methylthioinosine and S-inosyl-L-homocysteine, respectively. Is also able to deaminate adenosine. The protein is 5-methylthioadenosine/S-adenosylhomocysteine deaminase 1 of Syntrophus aciditrophicus (strain SB).